The primary structure comprises 457 residues: Casein kinase 1-like protein 11 (457 aa).

One can recognise a Protein kinase domain in the interval 15 to 284 (FKLGRKLGSG…LRRLFRDLFI (270 aa)). Residues 21–29 (LGSGSFGEL) and K44 contribute to the ATP site. D134 serves as the catalytic Proton acceptor. Disordered regions lie at residues 305–337 (GSSS…GQDL) and 352–442 (NVSS…EDAI). The span at 311 to 324 (RPTPRPALDPPGPP) shows a compositional bias: pro residues. 2 stretches are compositionally biased toward polar residues: residues 383–403 (NGST…SAEP) and 409–429 (SRLF…QSYE).

Belongs to the protein kinase superfamily. CK1 Ser/Thr protein kinase family. Casein kinase I subfamily. As to quaternary structure, monomer. In terms of processing, autophosphorylated.

Its subcellular location is the cytoplasm. It is found in the nucleus. It catalyses the reaction L-seryl-[protein] + ATP = O-phospho-L-seryl-[protein] + ADP + H(+). The enzyme catalyses L-threonyl-[protein] + ATP = O-phospho-L-threonyl-[protein] + ADP + H(+). With respect to regulation, partially inhibited by N-(2-aminoethyl)-5-chloroisoquinoline-8-sulfonamide (CKI-7). Casein kinases are operationally defined by their preferential utilization of acidic proteins such as caseins as substrates. Can phosphorylate casein, phosvitin, myosin light chains and poly(Glu,Tyr) in vitro. This Arabidopsis thaliana (Mouse-ear cress) protein is Casein kinase 1-like protein 11.